The primary structure comprises 462 residues: Cysteine--tRNA ligase (462 aa).

Cys-28 serves as a coordination point for Zn(2+). The short motif at 30 to 40 (MTVYDYCHIGH) is the 'HIGH' region element. Zn(2+)-binding residues include Cys-209, His-234, and Glu-238. Positions 266 to 270 (KMSKS) match the 'KMSKS' region motif. Lys-269 contacts ATP.

The protein belongs to the class-I aminoacyl-tRNA synthetase family. As to quaternary structure, monomer. Zn(2+) serves as cofactor.

The protein localises to the cytoplasm. It carries out the reaction tRNA(Cys) + L-cysteine + ATP = L-cysteinyl-tRNA(Cys) + AMP + diphosphate. This Pseudomonas fluorescens (strain SBW25) protein is Cysteine--tRNA ligase.